We begin with the raw amino-acid sequence, 398 residues long: Acetate kinase (398 aa).

Residue Asn7 participates in Mg(2+) binding. Lys14 contributes to the ATP binding site. Arg91 is a substrate binding site. The Proton donor/acceptor role is filled by Asp148. ATP is bound by residues 208–212, 283–285, and 331–335; these read HIGNG, DMR, and GVGEN. Glu384 contacts Mg(2+).

This sequence belongs to the acetokinase family. In terms of assembly, homodimer. The cofactor is Mg(2+). Mn(2+) serves as cofactor.

It is found in the cytoplasm. It catalyses the reaction acetate + ATP = acetyl phosphate + ADP. The protein operates within metabolic intermediate biosynthesis; acetyl-CoA biosynthesis; acetyl-CoA from acetate: step 1/2. Its function is as follows. Catalyzes the formation of acetyl phosphate from acetate and ATP. Can also catalyze the reverse reaction. This chain is Acetate kinase, found in Bacteroides fragilis (strain ATCC 25285 / DSM 2151 / CCUG 4856 / JCM 11019 / LMG 10263 / NCTC 9343 / Onslow / VPI 2553 / EN-2).